The sequence spans 138 residues: Small ribosomal subunit protein uS11c (138 aa).

Residues 1 to 21 form a disordered region; the sequence is MTKAIQKIGSRRNGRIASRKN. A compositionally biased stretch (basic residues) spans 9-21; it reads GSRRNGRIASRKN.

This sequence belongs to the universal ribosomal protein uS11 family. Part of the 30S ribosomal subunit.

It is found in the plastid. The protein resides in the chloroplast. The sequence is that of Small ribosomal subunit protein uS11c from Ceratophyllum demersum (Rigid hornwort).